The chain runs to 334 residues: L-lactate dehydrogenase B-A chain (334 aa).

Residues 30 to 58 (GQVG…VEDR) and R100 each bind NAD(+). Residues R107, N139, and R170 each coordinate substrate. An NAD(+)-binding site is contributed by N139. The active-site Proton acceptor is H194. Residue T249 participates in substrate binding.

It belongs to the LDH/MDH superfamily. LDH family. Homotetramer.

It localises to the cytoplasm. The catalysed reaction is (S)-lactate + NAD(+) = pyruvate + NADH + H(+). It participates in fermentation; pyruvate fermentation to lactate; (S)-lactate from pyruvate: step 1/1. In Danio rerio (Zebrafish), this protein is L-lactate dehydrogenase B-A chain (ldhba).